The following is a 104-amino-acid chain: Cytochrome c-552 (104 aa).

Positions 1–23 are cleaved as a signal peptide; it reads MHLHLRGICLVLAVASSSSSALA. Cys37, Cys40, His41, and Met82 together coordinate heme c.

It belongs to the cytochrome c family. As to quaternary structure, monoheme monomer. Has the tendency to dimerize. In terms of processing, binds 1 heme c group covalently per subunit.

It localises to the periplasm. The chain is Cytochrome c-552 (cycB) from Bradyrhizobium diazoefficiens (strain JCM 10833 / BCRC 13528 / IAM 13628 / NBRC 14792 / USDA 110).